The primary structure comprises 333 residues: Fatty acid hydroxylase domain-containing protein 2 (333 aa).

6 helical membrane passes run 29–49 (FILGSGLLSFVAFWNSVTWHL), 77–97 (ILFFIGAIQVPCLFFWSFNGL), 134–154 (TVLFNQCMVSFPMVVFLYPFL), 168–188 (FHWFLLELAIFTLIEEVLFYY), 215–235 (VISLYAHPIEHVVSNMLPAIV), and 237–257 (PLVMGSHLSSITMWFSLALII). The region spanning 176 to 299 (AIFTLIEEVL…LGVLDHLHGT (124 aa)) is the Fatty acid hydroxylase domain.

This sequence belongs to the sterol desaturase family.

Its subcellular location is the cytoplasm. It is found in the membrane. Functionally, promotes megakaryocyte differentiation by enhancing ERK phosphorylation and up-regulating RUNX1 expression. The protein is Fatty acid hydroxylase domain-containing protein 2 (FAXDC2) of Macaca fascicularis (Crab-eating macaque).